A 282-amino-acid chain; its full sequence is Armadillo repeat-containing protein 1 (282 aa).

Met-1 is subject to N-acetylmethionine. An ARM repeat occupies 39 to 81 (GCLPGLILFMDHPNPPVVHSALLALRYLAECRANREKMKGELG). At Thr-137 the chain carries Phosphothreonine. Phosphoserine is present on residues Ser-189, Ser-246, Ser-260, and Ser-267. The tract at residues 239 to 261 (DYLPEDESPTKEQDKAVSRVGSH) is disordered. Over residues 246–255 (SPTKEQDKAV) the composition is skewed to basic and acidic residues.

As to quaternary structure, interacts with mitochondrial contact site and cristae organizing system (MICOS) complex components IMMT/MIC60 and MICOS10/MIC10. Interacts with mitochondrial outer membrane sorting assembly machinery (SAM) complex components SAMM50 and MTX1.

It is found in the cytoplasm. The protein localises to the mitochondrion. Its subcellular location is the mitochondrion outer membrane. In association with mitochondrial contact site and cristae organizing system (MICOS) complex components and mitochondrial outer membrane sorting assembly machinery (SAM) complex components may regulate mitochondrial dynamics playing a role in determining mitochondrial length, distribution and motility. This is Armadillo repeat-containing protein 1 (Armc1) from Mus musculus (Mouse).